The primary structure comprises 275 residues: 2,3,4,5-tetrahydropyridine-2,6-dicarboxylate N-succinyltransferase (275 aa).

Positions 104 and 141 each coordinate substrate.

It belongs to the transferase hexapeptide repeat family. In terms of assembly, homotrimer.

It localises to the cytoplasm. It carries out the reaction (S)-2,3,4,5-tetrahydrodipicolinate + succinyl-CoA + H2O = (S)-2-succinylamino-6-oxoheptanedioate + CoA. It functions in the pathway amino-acid biosynthesis; L-lysine biosynthesis via DAP pathway; LL-2,6-diaminopimelate from (S)-tetrahydrodipicolinate (succinylase route): step 1/3. The chain is 2,3,4,5-tetrahydropyridine-2,6-dicarboxylate N-succinyltransferase from Aeromonas salmonicida (strain A449).